The chain runs to 290 residues: Probable aquaporin PIP2-1 (290 aa).

2 helical membrane-spanning segments follow: residues 43 to 63 and 80 to 100; these read AVIA…ATVI and CGGV…FILV. An NPA 1 motif is present at residues 112 to 114; the sequence is NPA. Helical transmembrane passes span 131 to 151, 173 to 193, and 207 to 227; these read ILYI…VKAF, GTGL…VFSA, and VLAP…TIPI. Residues 233–235 carry the NPA 2 motif; it reads NPA. A helical transmembrane segment spans residues 255–275; the sequence is IFWVGPFVGAAIAAFYHQYIL.

Belongs to the MIP/aquaporin (TC 1.A.8) family. PIP (TC 1.A.8.11) subfamily. Expressed in roots, leaves and anthers.

The protein resides in the cell membrane. Aquaporins facilitate the transport of water and small neutral solutes across cell membranes. The polypeptide is Probable aquaporin PIP2-1 (PIP2-1) (Oryza sativa subsp. japonica (Rice)).